Here is a 163-residue protein sequence, read N- to C-terminus: Troponin C (163 aa).

At serine 1 the chain carries N-acetylserine. 4 EF-hand domains span residues glutamate 14–serine 49, isoleucine 50–aspartate 85, isoleucine 90–aspartate 125, and leucine 127–arginine 162. Lysine 20 carries the post-translational modification N6,N6-dimethyllysine; alternate. Lysine 20 is modified (N6-methyllysine; alternate). Ca(2+) contacts are provided by aspartate 27, aspartate 29, aspartate 33, glutamate 38, aspartate 63, aspartate 65, serine 67, threonine 69, glutamate 74, aspartate 103, asparagine 105, aspartate 107, and glutamate 114.

It belongs to the troponin C family.

Troponin is the central regulatory protein of striated muscle contraction. Tn consists of three components: Tn-I which is the inhibitor of actomyosin ATPase, Tn-T which contains the binding site for tropomyosin and Tn-C. The binding of calcium to Tn-C abolishes the inhibitory action of Tn on actin filaments. The sequence is that of Troponin C from Branchiostoma lanceolatum (Common lancelet).